Consider the following 407-residue polypeptide: Arginine deiminase (407 aa).

Catalysis depends on Cys-397, which acts as the Amidino-cysteine intermediate.

It belongs to the arginine deiminase family.

The protein resides in the cytoplasm. It catalyses the reaction L-arginine + H2O = L-citrulline + NH4(+). It participates in amino-acid degradation; L-arginine degradation via ADI pathway; carbamoyl phosphate from L-arginine: step 1/2. In Pediococcus pentosaceus (strain ATCC 25745 / CCUG 21536 / LMG 10740 / 183-1w), this protein is Arginine deiminase.